We begin with the raw amino-acid sequence, 342 residues long: Delta(6)-protoilludene synthase (342 aa).

Mg(2+) is bound by residues aspartate 81, asparagine 217, serine 221, and glutamate 225. The DDXXD motif signature appears at aspartate 81–aspartate 85. Residues arginine 306 and tyrosine 307 each contribute to the (2E,6E)-farnesyl diphosphate site.

This sequence belongs to the terpene synthase family. Mg(2+) is required as a cofactor.

It carries out the reaction (2E,6E)-farnesyl diphosphate = Delta(6)-protoilludene + diphosphate. Delta(6)-protoilludene synthase, part of the gene cluster that mediates the biosynthesis of melleolides, a range of antifungal and phytotoxic polyketide derivatives composed of an orsellinic acid (OA) moiety esterified to various sesquiterpene alcohols. The first step in melleolides biosynthesis is performed by the delta(6)-protoilludene synthase PRO1 which catalyzes the cyclization of farnesyl diphosphate to protoilludene. The orsellinic acid synthase armB produces OA by condensing acetyl-CoA with 3 malonyl-CoA units in a three-round chain elongation reaction folowed by a C2-C7 ring closure. ArmB further catalyzes the trans-esterification of OA to the various sesquiterpene alcohols resulting from the hydroxylation of protoilludene. The melleolides cluster also includes 5 cytochrome P450 monooxygenases, 4 NAD(+)-dependent oxidoreductases, one flavin-dependent oxidoreductase, and one O-methyltransferase. The cytochrome P450 monooxygenases may be involved in protoilludene hydroxylation to elaborate melleolides with multiple alcohol groups, such as melleolide D, which carries alcohol functionalities at C-4, C-5, C-10, and C-13. The role of the NAD(+)-dependent enzymes remains unknown. Numerous melleolides, including arnamial, show 5'-O-methylation of the aromatic moiety which may be catalyzed by the methyltransferase encoded in the cluster. The flavin-dependent oxidoreductase might represent the dehydrogenase yielding the aldehyde in position 1 of arnamial and other melleolides. Finally, several halogenases, localized outside of the cluster, are able to catalyze the transfer of a single chlorine atom to the melleolide backbone, resulting in a 6'-chloromelleolide product. In Armillaria ostoyae (Armillaria root rot fungus), this protein is Delta(6)-protoilludene synthase.